The primary structure comprises 2273 residues: Acetyl-CoA carboxylase, mitochondrial (2273 aa).

The transit peptide at 1 to 104 directs the protein to the mitochondrion; sequence KGKTITHGQS…RGNIHKHTRL (104 aa). The 502-residue stretch at 134-635 folds into the Biotin carboxylation domain; that stretch reads VISKILIANN…STGWLDDLIL (502 aa). An ATP-grasp domain is found at 292–484; that stretch reads KTNFVSVPDD…LPATQLQIAM (193 aa). ATP is bound at residue 332 to 337; sequence GGGGKG. The active site involves Arg-459. Residues 763-837 form the Biotinyl-binding domain; the sequence is LEAELNPTQV…EAGDVIAKLT (75 aa). Lys-804 carries the post-translational modification N6-biotinyllysine. In terms of domain architecture, CoA carboxyltransferase N-terminal spans 1532–1867; sequence PYSVKDWLQP…KRDMSPPLLE (336 aa). The interval 1532–2187 is carboxyltransferase; the sequence is PYSVKDWLQP…EGQVIKRLQK (656 aa). 3 residues coordinate CoA: Arg-1776, Lys-2080, and Arg-2082. The 317-residue stretch at 1871 to 2187 folds into the CoA carboxyltransferase C-terminal domain; it reads RWDRDVDFKP…EGQVIKRLQK (317 aa).

It depends on biotin as a cofactor.

It is found in the mitochondrion. The enzyme catalyses hydrogencarbonate + acetyl-CoA + ATP = malonyl-CoA + ADP + phosphate + H(+). The catalysed reaction is N(6)-biotinyl-L-lysyl-[protein] + hydrogencarbonate + ATP = N(6)-carboxybiotinyl-L-lysyl-[protein] + ADP + phosphate + H(+). It participates in lipid metabolism; malonyl-CoA biosynthesis; malonyl-CoA from acetyl-CoA: step 1/1. In terms of biological role, catalyzes the rate-limiting reaction in the mitochondrial fatty acid synthesis (FAS) type II pathway. Responsible for the production of the mitochondrial malonyl-CoA, used for the biosynthesis of the cofactor lipoic acid. This protein carries three functions: biotin carboxyl carrier protein, biotin carboxylase, and carboxyltransferase. This chain is Acetyl-CoA carboxylase, mitochondrial (HFA1), found in Saccharomyces cerevisiae (strain RM11-1a) (Baker's yeast).